The primary structure comprises 619 residues: MVKESIIALAEHAASRASRVIPPVKLAYKNMLKDPSSKYKPFNAPKLSNRKWPDNRITRAPRWLSTDLRDGNQSLPDPMSVEQKKEYFHKLVNIGFKEIEVSFPSASQTDFDFTRYAVENAPDDVSIQCLVQSREHLIKRTVEALTGAKKATIHTYLATSDMFREIVFNMSREEAISKAVEATKLVRKLTKDDPSQQATRWSYEFSPECFSDTPGEFAVEICEAVKKAWEPTEENPIIFNLPATVEVASPNVYADQIEYFATHITEREKVCISTHCHNDRGCGVAATELGMLAGADRVEGCLFGNGERTGNVDLVTVAMNMYTQGVSPNLDFSDLTSVLDVVERCNKIPVSQRAPYGGDLVVCAFSGSHQDAIKKGFNLQNKKRAQGETQWRIPYLPLDPKDIGRDYEAVIRVNSQSGKGGAAWVILRSLGLDLPRNMQIEFSSAVQDHADSLGRELKSDEISKLFKEAYNYNDEQYQAISLVNYNVEKFGTERRVFTGQVKVGDQIVDIEGTGNGPISSLVDALSNLLNVRFAVANYTEHSLGSGSSTQAASYIHLSYRRNADNEKAYKWGVGVSEDVGDSSVRAIFATINNIIHSGDVSIPSLAEVEGKNAAASGSA.

The 276-residue stretch at 61-336 folds into the Pyruvate carboxyltransferase domain; that stretch reads PRWLSTDLRD…SPNLDFSDLT (276 aa). Asp70, His275, His277, and Asn311 together coordinate a divalent metal cation.

This sequence belongs to the alpha-IPM synthase/homocitrate synthase family. LeuA type 2 subfamily. Homodimer. The cofactor is a divalent metal cation.

It is found in the cytoplasm. Its subcellular location is the mitochondrion. The catalysed reaction is 3-methyl-2-oxobutanoate + acetyl-CoA + H2O = (2S)-2-isopropylmalate + CoA + H(+). Its pathway is amino-acid biosynthesis; L-leucine biosynthesis; L-leucine from 3-methyl-2-oxobutanoate: step 1/4. Its function is as follows. Catalyzes the condensation of the acetyl group of acetyl-CoA with 3-methyl-2-oxobutanoate (2-oxoisovalerate) to form 3-carboxy-3-hydroxy-4-methylpentanoate (2-isopropylmalate). This chain is 2-isopropylmalate synthase (LEU4), found in Saccharomyces cerevisiae (strain ATCC 204508 / S288c) (Baker's yeast).